Here is a 562-residue protein sequence, read N- to C-terminus: MDDNKRPLYLPFAGPAILESPLLNKGSAFSEEERIYFNLEGLIPWVIETIDEQAARAYAQFKNFTNDLDKHIYLRNIQDTNETLFYRLVRNNISEMMPIIYTPTVGLACERFSKNYRRNRGLFISYPNKDRIDDILNNSTRHKVKVIVVTDGERILGLGDQGIGGMGIPIGKLSLYTSCGGISPAYCLAVTLDVGTDNPQLLEDPMYMGWRHQRIGGDEYAEFVEEFMQAVSRRWPDALIQFEDFAQKNAMPLLERYKDQYCSFNDDIQGTAAVTVGSLLAACKAANSKLSEQRITFLGAGSAGCGIAEAIVATMVSEGISDQQARSQVFMVDRWGLLLDNMPNLLPFQQKLAQPCATIEAWDNYSDNISLLDVVNNAKPTVLIGVSGSPGLFTEEIIKAMHSHCKRPIVFPLSNPTSRVEATPKDILNWTSGQALVATGSPFEPVIVNGETFEIAQCNNSFIFPGIGLGVLSCGARRVSDEMLMASSRALAECSPLGKDGVGSLLPRLEDIQTVSKYIAFAVAKAAIDQGLALPCTDELLQQSIEANFWEPEYRRYKRTSF.

Y101 (proton donor) is an active-site residue. R154 contacts NAD(+). K172 acts as the Proton acceptor in catalysis. Positions 243, 244, and 267 each coordinate a divalent metal cation. Residues D267 and N415 each contribute to the NAD(+) site.

It belongs to the malic enzymes family. As to quaternary structure, homotetramer. The cofactor is Mg(2+). It depends on Mn(2+) as a cofactor.

It catalyses the reaction (S)-malate + NAD(+) = pyruvate + CO2 + NADH. The catalysed reaction is oxaloacetate + H(+) = pyruvate + CO2. The protein is NAD-dependent malic enzyme of Shewanella frigidimarina (strain NCIMB 400).